A 355-amino-acid chain; its full sequence is Methylthioribose-1-phosphate isomerase (355 aa).

Residues 47-49 (RGA), Arg90, and Gln197 contribute to the substrate site. Asp238 (proton donor) is an active-site residue. Substrate is bound at residue 248 to 249 (NK).

Belongs to the eIF-2B alpha/beta/delta subunits family. MtnA subfamily.

The catalysed reaction is 5-(methylsulfanyl)-alpha-D-ribose 1-phosphate = 5-(methylsulfanyl)-D-ribulose 1-phosphate. Its pathway is amino-acid biosynthesis; L-methionine biosynthesis via salvage pathway; L-methionine from S-methyl-5-thio-alpha-D-ribose 1-phosphate: step 1/6. In terms of biological role, catalyzes the interconversion of methylthioribose-1-phosphate (MTR-1-P) into methylthioribulose-1-phosphate (MTRu-1-P). The chain is Methylthioribose-1-phosphate isomerase from Herpetosiphon aurantiacus (strain ATCC 23779 / DSM 785 / 114-95).